The chain runs to 364 residues: Peptide chain release factor 1 (364 aa).

An N5-methylglutamine modification is found at Q232.

It belongs to the prokaryotic/mitochondrial release factor family. In terms of processing, methylated by PrmC. Methylation increases the termination efficiency of RF1.

The protein localises to the cytoplasm. Peptide chain release factor 1 directs the termination of translation in response to the peptide chain termination codons UAG and UAA. In Sorangium cellulosum (strain So ce56) (Polyangium cellulosum (strain So ce56)), this protein is Peptide chain release factor 1.